The sequence spans 328 residues: Tetraacyldisaccharide 4'-kinase (328 aa).

55-62 contacts ATP; sequence TAGGNGKT.

Belongs to the LpxK family.

The enzyme catalyses a lipid A disaccharide + ATP = a lipid IVA + ADP + H(+). The protein operates within glycolipid biosynthesis; lipid IV(A) biosynthesis; lipid IV(A) from (3R)-3-hydroxytetradecanoyl-[acyl-carrier-protein] and UDP-N-acetyl-alpha-D-glucosamine: step 6/6. Its function is as follows. Transfers the gamma-phosphate of ATP to the 4'-position of a tetraacyldisaccharide 1-phosphate intermediate (termed DS-1-P) to form tetraacyldisaccharide 1,4'-bis-phosphate (lipid IVA). The sequence is that of Tetraacyldisaccharide 4'-kinase from Escherichia coli O45:K1 (strain S88 / ExPEC).